The following is a 113-amino-acid chain: uncharacterized protein (113 aa).

A helical transmembrane segment spans residues 4–26 (VLFKIAVALLYLLSFFLHRLHLR). The tract at residues 32–74 (RRRRRRHHRRHHRRHHHHRRRRRRRRRRRRRHHRHHHHRHRRR) is disordered.

It is found in the membrane. This is an uncharacterized protein from Saccharomyces cerevisiae (strain ATCC 204508 / S288c) (Baker's yeast).